The chain runs to 68 residues: Large ribosomal subunit protein uL29 (68 aa).

Belongs to the universal ribosomal protein uL29 family.

The chain is Large ribosomal subunit protein uL29 from Chlorobaculum parvum (strain DSM 263 / NCIMB 8327) (Chlorobium vibrioforme subsp. thiosulfatophilum).